The chain runs to 213 residues: GrpE protein homolog, mitochondrial (213 aa).

The interval 35 to 55 (STEKQPEEATEQKATESSPEV) is disordered. A compositionally biased stretch (basic and acidic residues) spans 38–55 (KQPEEATEQKATESSPEV).

The protein belongs to the GrpE family. As to quaternary structure, probable component of the PAM complex at least composed of a mitochondrial HSP70 protein, Roe1, TIM44, blp/TIM16 and TIM14.

Its subcellular location is the mitochondrion matrix. Functionally, essential component of the PAM complex, a complex required for the translocation of transit peptide-containing proteins from the inner membrane into the mitochondrial matrix in an ATP-dependent manner. Seems to control the nucleotide-dependent binding of mitochondrial HSP70 to substrate proteins. This is GrpE protein homolog, mitochondrial (Roe1) from Drosophila melanogaster (Fruit fly).